A 1045-amino-acid polypeptide reads, in one-letter code: Tyrosine-protein kinase-like otk (1045 aa).

Positions Met1 to Ala25 are cleaved as a signal peptide. 5 Ig-like C2-type domains span residues Ser26 to Ser116, Leu115 to Ser200, Pro260 to Asn373, Pro376 to Asn469, and Pro474 to Leu564. The Extracellular segment spans residues Ser26–Ala587. Intrachain disulfides connect Cys49–Cys97, Cys139–Cys189, Cys285–Cys362, and Cys406–Cys453. N-linked (GlcNAc...) asparagine glycosylation is found at Asn344, Asn424, Asn435, Asn442, Asn450, Asn463, Asn518, and Asn530. Residues Cys496 and Cys548 are joined by a disulfide bond. Residues Val588–Trp608 traverse the membrane as a helical segment. Residues Cys609–Lys1045 are Cytoplasmic-facing. A disordered region spans residues Ala628–Lys676. Ser681 bears the Phosphoserine mark. The Protein kinase; inactive domain maps to Leu695–Met1040. Positions Ala722–Ser790 are disordered. A compositionally biased stretch (basic and acidic residues) spans Ser725–Ser736. The span at Gly743 to Ser752 shows a compositional bias: gly residues. The span at Asp771–Pro782 shows a compositional bias: acidic residues.

The protein belongs to the protein kinase superfamily. Tyr protein kinase family. Insulin receptor subfamily. As to quaternary structure, interacts with plexA; component of a receptor complex that mediates the repulsive signaling in response to Semaphorin ligands.

The protein localises to the cell membrane. Functionally, acts as a calcium-dependent, homophilic cell adhesion molecule that regulates neural recognition during the development of the nervous system. Component of the repulsive Plexin signaling response to regulate motor axon guidance at the embryonic stage. Also component of a receptor complex that is required in the adult visual system to innervate the lamina layer; specific targeting of R1-R6 axons. This Drosophila mojavensis (Fruit fly) protein is Tyrosine-protein kinase-like otk.